Here is a 177-residue protein sequence, read N- to C-terminus: ATP synthase subunit delta (177 aa).

It belongs to the ATPase delta chain family. As to quaternary structure, F-type ATPases have 2 components, F(1) - the catalytic core - and F(0) - the membrane proton channel. F(1) has five subunits: alpha(3), beta(3), gamma(1), delta(1), epsilon(1). F(0) has three main subunits: a(1), b(2) and c(10-14). The alpha and beta chains form an alternating ring which encloses part of the gamma chain. F(1) is attached to F(0) by a central stalk formed by the gamma and epsilon chains, while a peripheral stalk is formed by the delta and b chains.

It localises to the cell inner membrane. Its function is as follows. F(1)F(0) ATP synthase produces ATP from ADP in the presence of a proton or sodium gradient. F-type ATPases consist of two structural domains, F(1) containing the extramembraneous catalytic core and F(0) containing the membrane proton channel, linked together by a central stalk and a peripheral stalk. During catalysis, ATP synthesis in the catalytic domain of F(1) is coupled via a rotary mechanism of the central stalk subunits to proton translocation. This protein is part of the stalk that links CF(0) to CF(1). It either transmits conformational changes from CF(0) to CF(1) or is implicated in proton conduction. The sequence is that of ATP synthase subunit delta from Pseudoalteromonas translucida (strain TAC 125).